Here is a 241-residue protein sequence, read N- to C-terminus: DNA repair protein RecO (241 aa).

Belongs to the RecO family.

Its function is as follows. Involved in DNA repair and RecF pathway recombination. The polypeptide is DNA repair protein RecO (Orientia tsutsugamushi (strain Boryong) (Rickettsia tsutsugamushi)).